We begin with the raw amino-acid sequence, 274 residues long: Thiamine kinase (274 aa).

It belongs to the thiamine kinase family.

It catalyses the reaction thiamine + ATP = thiamine phosphate + ADP + H(+). It functions in the pathway cofactor biosynthesis; thiamine diphosphate biosynthesis; thiamine phosphate from thiamine: step 1/1. Its function is as follows. Catalyzes the ATP-dependent phosphorylation of thiamine to thiamine phosphate. Is involved in thiamine salvage. The polypeptide is Thiamine kinase (Shigella dysenteriae serotype 1 (strain Sd197)).